Here is a 234-residue protein sequence, read N- to C-terminus: Orotidine 5'-phosphate decarboxylase (234 aa).

Residues aspartate 10, lysine 32, 59 to 68 (DLKLHDIPTT), threonine 122, arginine 184, glutamine 193, glycine 213, and arginine 214 contribute to the substrate site. Lysine 61 acts as the Proton donor in catalysis.

The protein belongs to the OMP decarboxylase family. Type 1 subfamily. As to quaternary structure, homodimer.

The enzyme catalyses orotidine 5'-phosphate + H(+) = UMP + CO2. The protein operates within pyrimidine metabolism; UMP biosynthesis via de novo pathway; UMP from orotate: step 2/2. In terms of biological role, catalyzes the decarboxylation of orotidine 5'-monophosphate (OMP) to uridine 5'-monophosphate (UMP). This chain is Orotidine 5'-phosphate decarboxylase, found in Bacillus pumilus (strain SAFR-032).